Here is a 502-residue protein sequence, read N- to C-terminus: ATP synthase subunit alpha (502 aa).

169–176 (GDRQTGKT) contributes to the ATP binding site.

This sequence belongs to the ATPase alpha/beta chains family. As to quaternary structure, F-type ATPases have 2 components, CF(1) - the catalytic core - and CF(0) - the membrane proton channel. CF(1) has five subunits: alpha(3), beta(3), gamma(1), delta(1), epsilon(1). CF(0) has three main subunits: a(1), b(2) and c(9-12). The alpha and beta chains form an alternating ring which encloses part of the gamma chain. CF(1) is attached to CF(0) by a central stalk formed by the gamma and epsilon chains, while a peripheral stalk is formed by the delta and b chains.

Its subcellular location is the cell membrane. It carries out the reaction ATP + H2O + 4 H(+)(in) = ADP + phosphate + 5 H(+)(out). Produces ATP from ADP in the presence of a proton gradient across the membrane. The alpha chain is a regulatory subunit. In Exiguobacterium sibiricum (strain DSM 17290 / CCUG 55495 / CIP 109462 / JCM 13490 / 255-15), this protein is ATP synthase subunit alpha.